The following is a 492-amino-acid chain: Lysine--tRNA ligase (492 aa).

Aspartate 395 and glutamate 402 together coordinate Mg(2+).

This sequence belongs to the class-II aminoacyl-tRNA synthetase family. As to quaternary structure, homodimer. Requires Mg(2+) as cofactor.

It is found in the cytoplasm. The catalysed reaction is tRNA(Lys) + L-lysine + ATP = L-lysyl-tRNA(Lys) + AMP + diphosphate. This chain is Lysine--tRNA ligase, found in Thermus thermophilus (strain ATCC BAA-163 / DSM 7039 / HB27).